The primary structure comprises 306 residues: Homeobox protein HMX3 (306 aa).

Residues 95–181 (HTPRTEVPDK…DKKPCRKKKT (87 aa)) are disordered. Composition is skewed to basic and acidic residues over residues 117 to 143 (GERD…KSPE) and 153 to 174 (EEGK…PDKK). The homeobox DNA-binding region spans 178 to 237 (KKKTRTVFSRSQVFQLESTFDMKRYLSSSERAGLAASLHLTETQVKIWFQNRRNKWKRQL).

This sequence belongs to the HMX homeobox family.

The protein localises to the nucleus. Functionally, transcription factor involved in specification of neuronal cell types and which is required for inner ear and hypothalamus development. Binds to the 5'-CAAGTG-3' core sequence. May act as a stage-specific inhibitor of anf1 in the anterior neural plate during the development. The sequence is that of Homeobox protein HMX3 (hmx3) from Xenopus laevis (African clawed frog).